The following is a 792-amino-acid chain: Probable phosphoketolase (792 aa).

This sequence belongs to the XFP family. Thiamine diphosphate is required as a cofactor.

The sequence is that of Probable phosphoketolase from Brucella melitensis biotype 1 (strain ATCC 23456 / CCUG 17765 / NCTC 10094 / 16M).